The chain runs to 624 residues: Basal cell adhesion molecule (624 aa).

The first 25 residues, 1–25 (MEPPDARAGLLWLTLLLSGYSGAQA), serve as a signal peptide directing secretion. Ig-like V-type domains lie at 26–136 (ELHV…SSVR) and 141–251 (PEAT…HTFR). The Extracellular segment spans residues 26–543 (ELHVSVPPRV…GSVAPQTAQA (518 aa)). Disulfide bonds link Cys-47/Cys-119, Cys-166/Cys-231, and Cys-285/Cys-331. 3 consecutive Ig-like C2-type domains span residues 268 to 343 (PSTT…EEVQ), 357 to 436 (PLEL…QSFQ), and 443 to 534 (PELK…FHFG). Residues Asn-315, Asn-371, and Asn-378 are each glycosylated (N-linked (GlcNAc...) asparagine). 2 cysteine pairs are disulfide-bonded: Cys-379-Cys-419 and Cys-468-Cys-518. The segment at 477–497 (KLTWSQRGDTTPAEPPFEGRG) is disordered. Residues 544–564 (GVAVMAVAVSVGLLLLVVAAF) form a helical membrane-spanning segment. The Cytoplasmic portion of the chain corresponds to 565–624 (YCMRRKGRPGCCQRAEKGAPPAREPELSHSGSERPEHTGLLMGGPSGGGRGGNGGFGDEC). Residues 574-624 (GCCQRAEKGAPPAREPELSHSGSERPEHTGLLMGGPSGGGRGGNGGFGDEC) are disordered. Positions 587–601 (REPELSHSGSERPEH) are enriched in basic and acidic residues. Phosphoserine occurs at positions 592, 594, and 596. Gly residues predominate over residues 605–624 (LMGGPSGGGRGGNGGFGDEC).

As to quaternary structure, homodimer. Interacts with ITGA4:ITGB1. Interacts with spectrins SPTA1 and SPTB1.

Its subcellular location is the cell membrane. Functionally, transmembrane glycoprotein that functions as both a receptor and an adhesion molecule playing a crucial role in cell adhesion, motility, migration and invasion. Extracellular domain enables binding to extracellular matrix proteins, such as laminin, integrin and other ligands while its intracellular domain interacts with cytoskeletal proteins like hemoglobin, facilitating cell signal transduction. Serves as a receptor for laminin alpha-5/LAMA5 to promote cell adhesion. Mechanistically, JAK2 induces BCAM phosphorylation and activates its adhesion to laminin by stimulating a Rap1/AKT signaling pathway in the absence of EPOR. The sequence is that of Basal cell adhesion molecule (Bcam) from Rattus norvegicus (Rat).